The chain runs to 528 residues: Protein arginine N-methyltransferase 3 (528 aa).

The segment at M1–R43 is disordered. Position 2 is an N-acetylcysteine (C2). S22 and S24 each carry phosphoserine. Over residues D23 to T37 the composition is skewed to acidic residues. The C2H2-type zinc finger occupies T46–H69. Phosphoserine is present on S169. The segment at M184–Q528 is mediates interaction with ALDH1A1. The 315-residue stretch at D214–Q528 folds into the SAM-dependent MTase PRMT-type domain. S-adenosyl-L-homocysteine contacts are provided by R236, G260, D282, S284, I310, and E311. Residues E326 and E335 contribute to the active site.

The protein belongs to the class I-like SAM-binding methyltransferase superfamily. Protein arginine N-methyltransferase family. Monomer and homodimer. Interacts with EPB41L3 (via FERM domain); the interaction is direct and inhibits the protein-arginine N-methyltransferase activity of PRMT3. Interacts with the 40S ribosomal protein RPS2. Interacts with ALDH1A1; the interaction is direct, inhibits ALDH1A1 aldehyde dehydrogenase activity and is independent of the methyltransferase activity of PRMT3.

Its subcellular location is the cytoplasm. The protein resides in the cytosol. The protein localises to the nucleus. The catalysed reaction is L-arginyl-[protein] + S-adenosyl-L-methionine = N(omega)-methyl-L-arginyl-[protein] + S-adenosyl-L-homocysteine + H(+). It carries out the reaction L-arginyl-[protein] + 2 S-adenosyl-L-methionine = N(omega),N(omega)-dimethyl-L-arginyl-[protein] + 2 S-adenosyl-L-homocysteine + 2 H(+). Inhibited by N-ethylmaleimide and high concentrations of zinc chloride. Functionally, protein-arginine N-methyltransferase that catalyzes both the monomethylation and asymmetric dimethylation of the guanidino nitrogens of arginine residues in target proteins, and therefore falls into the group of type I methyltransferases. Catalyzes the asymmetric arginine dimethylation at multiple sites in the Arg/Gly-rich region of small ribosomal subunit protein uS5/RPS2. Also appears to methylate other ribosomal proteins. May regulate retinoic acid synthesis and signaling by inhibiting ALDH1A1 retinal dehydrogenase activity. Contributes to methylation of histone H4 'Arg-3', a specific tag for epigenetic transcriptional activation. Promotes osteogenesis. The sequence is that of Protein arginine N-methyltransferase 3 from Mus musculus (Mouse).